Reading from the N-terminus, the 670-residue chain is Putative segment polarity protein dishevelled homolog DVL1P1 (670 aa).

The DIX domain maps to 1 to 85 (MAETKIIYHM…RVVSWLVLVE (85 aa)). Positions 89–240 (SDAGSQGTDS…ADRASSFSSM (152 aa)) are disordered. Residues 142 to 151 (SHRRDRARRR) are compositionally biased toward basic residues. The segment covering 152 to 171 (NREEAARTNGHPRGDRRRDV) has biased composition (basic and acidic residues). Low complexity-rich tracts occupy residues 176 to 192 (DSASTALSSELESSSFV) and 201 to 214 (SRLSSSTEQSTSSR). Positions 215 to 228 (LIRKHKRRRRKQRL) are enriched in basic residues. A PDZ domain is found at 251–323 (TVTLNMERHH…NDDAVRVLRE (73 aa)). Residues 400 to 474 (PDSGLEIRDR…SEQCYYVFGD (75 aa)) form the DEP domain. Residues 518–642 (PGPPPCFPPA…PGGPPVRELA (125 aa)) form a disordered region. Low complexity-rich tracts occupy residues 526 to 553 (PAYQDPGFSYGSGSTGSQQSEGSKSSGS) and 600 to 614 (SRGSSPRSQASSYAP).

Belongs to the DSH family. In terms of tissue distribution, expressed in thymus, heart, liver, kidney, brain, skeletal muscle, and pancreas.

Its subcellular location is the cytoplasm. Functionally, may play a role in the signal transduction pathway mediated by multiple Wnt genes. The polypeptide is Putative segment polarity protein dishevelled homolog DVL1P1 (DVL1P1) (Homo sapiens (Human)).